The following is a 111-amino-acid chain: uncharacterized protein (111 aa).

4 helical membrane passes run 4-21, 28-47, 51-73, and 80-102; these read FITA…FVSF, LVYF…YMIY, TGIR…VTAF, and SFFF…YLGM.

It localises to the cell membrane. This is an uncharacterized protein from Bacillus subtilis (strain 168).